The chain runs to 89 residues: Small ribosomal subunit protein uS15 (89 aa).

The segment covering 1–11 (MSITAERKAEV) has biased composition (basic and acidic residues). Positions 1-25 (MSITAERKAEVIKTNARKSGDTGSP) are disordered.

Belongs to the universal ribosomal protein uS15 family. Part of the 30S ribosomal subunit. Forms a bridge to the 50S subunit in the 70S ribosome, contacting the 23S rRNA.

Functionally, one of the primary rRNA binding proteins, it binds directly to 16S rRNA where it helps nucleate assembly of the platform of the 30S subunit by binding and bridging several RNA helices of the 16S rRNA. In terms of biological role, forms an intersubunit bridge (bridge B4) with the 23S rRNA of the 50S subunit in the ribosome. This Nitrobacter hamburgensis (strain DSM 10229 / NCIMB 13809 / X14) protein is Small ribosomal subunit protein uS15.